A 367-amino-acid chain; its full sequence is Putative F-box protein At4g10190 (367 aa).

In terms of domain architecture, F-box spans 3 to 53 (KRNIVDLPEDLVMEILARVPTVTLVRLQSTSKRWNVLIEDKRFAEQHFTNA).

In Arabidopsis thaliana (Mouse-ear cress), this protein is Putative F-box protein At4g10190.